The following is a 563-amino-acid chain: Choline transporter (563 aa).

The interval Met1–Lys25 is disordered. Topologically, residues Met1 to Ser57 are extracellular. Asn7 and Asn20 each carry an N-linked (GlcNAc...) asparagine glycan. Ser22 and Ser42 each carry phosphoserine. Residues Phe58–Ser78 traverse the membrane as a helical segment. At Thr79–Ser87 the chain is on the cytoplasmic side. A helical membrane pass occupies residues Gly88 to Gly108. Over Thr109 to Arg182 the chain is Extracellular. Residues Trp183–Gly203 traverse the membrane as a helical segment. The Cytoplasmic portion of the chain corresponds to Lys204–Ser205. The helical transmembrane segment at Leu206–Ile226 threads the bilayer. At Thr227 to Gly255 the chain is on the extracellular side. Asn248 carries N-linked (GlcNAc...) asparagine glycosylation. The chain crosses the membrane as a helical span at residues Gly256–Ala276. Topologically, residues Thr277 to Ala293 are cytoplasmic. A helical transmembrane segment spans residues Ile294 to Phe314. Residues Ser315 to Lys342 are Extracellular-facing. An N-linked (GlcNAc...) asparagine glycan is attached at Asn341. The helical transmembrane segment at Ser343–Cys363 threads the bilayer. Topologically, residues His364–Asn398 are cytoplasmic. The chain crosses the membrane as a helical span at residues Ala399–Ser417. The Extracellular segment spans residues Ser418–Thr426. A helical transmembrane segment spans residues Gly427 to Ala445. Residues Lys446–Asn465 are Cytoplasmic-facing. The helical transmembrane segment at Ile466–Pro486 threads the bilayer. The Extracellular segment spans residues Val487–Asn491. A helical transmembrane segment spans residues Met492–Tyr512. The Cytoplasmic portion of the chain corresponds to Lys513 to Lys563.

This sequence belongs to the amino acid-polyamine-organocation (APC) superfamily. Amino acid/choline transporter (ACT) (TC 2.A.3.4) family.

It is found in the membrane. It carries out the reaction choline(out) = choline(in). The enzyme catalyses ethanolamine(in) = ethanolamine(out). Sole choline transporter in yeast. Also transports ethanolamine. This is Choline transporter (HNM1) from Saccharomyces cerevisiae (strain ATCC 204508 / S288c) (Baker's yeast).